We begin with the raw amino-acid sequence, 100 residues long: Urease subunit gamma (100 aa).

Belongs to the urease gamma subunit family. In terms of assembly, heterotrimer of UreA (gamma), UreB (beta) and UreC (alpha) subunits. Three heterotrimers associate to form the active enzyme.

Its subcellular location is the cytoplasm. The catalysed reaction is urea + 2 H2O + H(+) = hydrogencarbonate + 2 NH4(+). Its pathway is nitrogen metabolism; urea degradation; CO(2) and NH(3) from urea (urease route): step 1/1. In Burkholderia multivorans (strain ATCC 17616 / 249), this protein is Urease subunit gamma.